Here is a 291-residue protein sequence, read N- to C-terminus: ATP synthase gamma chain (291 aa).

Belongs to the ATPase gamma chain family. As to quaternary structure, F-type ATPases have 2 components, CF(1) - the catalytic core - and CF(0) - the membrane proton channel. CF(1) has five subunits: alpha(3), beta(3), gamma(1), delta(1), epsilon(1). CF(0) has three main subunits: a, b and c.

Its subcellular location is the cell inner membrane. Functionally, produces ATP from ADP in the presence of a proton gradient across the membrane. The gamma chain is believed to be important in regulating ATPase activity and the flow of protons through the CF(0) complex. This chain is ATP synthase gamma chain, found in Pelagibacter ubique (strain HTCC1062).